The sequence spans 121 residues: uncharacterized protein (121 aa).

2 consecutive transmembrane segments (helical) span residues 26-46 (FIAL…ILVL) and 72-92 (AFLT…WLGL).

It is found in the membrane. This is an uncharacterized protein from Saccharomyces cerevisiae (strain ATCC 204508 / S288c) (Baker's yeast).